The primary structure comprises 139 residues: Large-conductance mechanosensitive channel (139 aa).

2 consecutive transmembrane segments (helical) span residues 9–29 (AFAV…GAAF) and 79–99 (IQTV…VKAI).

It belongs to the MscL family. As to quaternary structure, homopentamer.

It is found in the cell inner membrane. Channel that opens in response to stretch forces in the membrane lipid bilayer. May participate in the regulation of osmotic pressure changes within the cell. The chain is Large-conductance mechanosensitive channel from Pseudomonas putida (strain ATCC 700007 / DSM 6899 / JCM 31910 / BCRC 17059 / LMG 24140 / F1).